We begin with the raw amino-acid sequence, 670 residues long: DNA ligase (670 aa).

NAD(+)-binding positions include 32–36 (DAEYD), 81–82 (SL), and Glu113. The active-site N6-AMP-lysine intermediate is the Lys115. NAD(+)-binding residues include Arg136, Glu173, Lys290, and Lys314. Residues Cys408, Cys411, Cys426, and Cys432 each contribute to the Zn(2+) site. A BRCT domain is found at 592–670 (ESDSPFAGKT…EAEMIRLLGE (79 aa)).

The protein belongs to the NAD-dependent DNA ligase family. LigA subfamily. It depends on Mg(2+) as a cofactor. Requires Mn(2+) as cofactor.

The enzyme catalyses NAD(+) + (deoxyribonucleotide)n-3'-hydroxyl + 5'-phospho-(deoxyribonucleotide)m = (deoxyribonucleotide)n+m + AMP + beta-nicotinamide D-nucleotide.. DNA ligase that catalyzes the formation of phosphodiester linkages between 5'-phosphoryl and 3'-hydroxyl groups in double-stranded DNA using NAD as a coenzyme and as the energy source for the reaction. It is essential for DNA replication and repair of damaged DNA. The polypeptide is DNA ligase (Yersinia pestis bv. Antiqua (strain Antiqua)).